Reading from the N-terminus, the 94-residue chain is Co-chaperonin GroES (94 aa).

This sequence belongs to the GroES chaperonin family. As to quaternary structure, heptamer of 7 subunits arranged in a ring. Interacts with the chaperonin GroEL.

It localises to the cytoplasm. Functionally, together with the chaperonin GroEL, plays an essential role in assisting protein folding. The GroEL-GroES system forms a nano-cage that allows encapsulation of the non-native substrate proteins and provides a physical environment optimized to promote and accelerate protein folding. GroES binds to the apical surface of the GroEL ring, thereby capping the opening of the GroEL channel. This chain is Co-chaperonin GroES, found in Ruminiclostridium cellulolyticum (strain ATCC 35319 / DSM 5812 / JCM 6584 / H10) (Clostridium cellulolyticum).